An 859-amino-acid polypeptide reads, in one-letter code: Heterogeneous nuclear ribonucleoprotein U-like protein 1 (859 aa).

Residues 1 to 103 form a necessary for interaction with HRMT1L1 region; that stretch reads MDVRRLKVNE…GPDGHYVMDN (103 aa). An SAP domain is found at 3 to 37; the sequence is VRRLKVNELREELQRRGLDTRGLKAELAERLLAAL. Residues 36-131 are disordered; sequence ALEAEEPEDE…SSYDRRPLDM (96 aa). The segment covering 38–54 has biased composition (acidic residues); sequence EAEEPEDERELEADDDP. Pro residues predominate over residues 77–88; the sequence is QPPPPGLQPHPE. Lys117 is covalently cross-linked (Glycyl lysine isopeptide (Lys-Gly) (interchain with G-Cter in SUMO1); alternate). Lys117 is covalently cross-linked (Glycyl lysine isopeptide (Lys-Gly) (interchain with G-Cter in SUMO2); alternate). Basic and acidic residues predominate over residues 118 to 130; sequence QENESSYDRRPLD. Lys143 participates in a covalent cross-link: Glycyl lysine isopeptide (Lys-Gly) (interchain with G-Cter in SUMO1); alternate. Lys143 participates in a covalent cross-link: Glycyl lysine isopeptide (Lys-Gly) (interchain with G-Cter in SUMO2); alternate. Residues 146-206 form a disordered region; sequence MKQEAPPSFL…QPPAEEDEDD (61 aa). Glycyl lysine isopeptide (Lys-Gly) (interchain with G-Cter in SUMO2) cross-links involve residues Lys147 and Lys163. A compositionally biased stretch (basic and acidic residues) spans 174–193; the sequence is RPFEENRGRGYFEHREDRRG. Residues 192–389 enclose the B30.2/SPRY domain; the sequence is RGRSPQPPAE…VEFNFGQRAE (198 aa). Ser195 is modified (phosphoserine). Phosphothreonine is present on Thr210. Residues 214–859 are necessary for interaction with TP53; that stretch reads IDTYNCDLHF…GSTQGGTSTQ (646 aa). Residues Lys271 and Lys450 each participate in a glycyl lysine isopeptide (Lys-Gly) (interchain with G-Cter in SUMO2) cross-link. The segment at 457 to 595 is necessary for interaction with BRD7 and transcriptional activation; it reads NAIMDKMRVM…EEADKLVRQY (139 aa). Ser513 carries the post-translational modification Phosphoserine. Lys540 is covalently cross-linked (Glycyl lysine isopeptide (Lys-Gly) (interchain with G-Cter in SUMO2)). Over residues 595–612 the composition is skewed to basic and acidic residues; that stretch reads YNEEGRKAGPPPEKRFDS. The tract at residues 595 to 814 is disordered; it reads YNEEGRKAGP…PPTAQTYPQP (220 aa). 5 tandem repeats follow at residues 613-615, 620-622, 639-641, 645-647, and 659-661. 2 stretches are compositionally biased toward gly residues: residues 613–626 and 634–670; these read RGGG…GGGF and PPGG…GGGY. Residues 613–661 are 5 X 3 AA repeats of R-G-G; it reads RGGGFRGRGGGGGFQRYDNRGPPGGNRGGFQNRGGGGGSGGGGGNYRGG. A necessary for transcription repression region spans residues 613-661; it reads RGGGFRGRGGGGGFQRYDNRGPPGGNRGGFQNRGGGGGSGGGGGNYRGG. Asymmetric dimethylarginine is present on Arg639. An asymmetric dimethylarginine; alternate mark is found at Arg645 and Arg659. 2 positions are modified to omega-N-methylarginine; alternate: Arg645 and Arg659. Omega-N-methylarginine occurs at positions 664 and 674. Positions 671–696 are enriched in low complexity; that stretch reads NQNRWGNNNRDNNNSNNRGNYNRAPQ. Pro residues predominate over residues 697–720; sequence QQPPPQQPPPPQPPPQQPPPPPSY. Phosphoserine is present on Ser721. Over residues 728 to 744 the composition is skewed to polar residues; that stretch reads GASSYNKNSNIPGSSAN. Residues 745-775 are compositionally biased toward low complexity; sequence TSTPTVSSYTPPQPSYSQPPYNQGGYTQGYT. Composition is skewed to pro residues over residues 776-786 and 796-807; these read APPPPPPPPPA and NPAPYTPPPPPT.

In terms of assembly, interacts with BRD7, PRMT2, TP53 and NXF1. Associates with histones and BRD7. Methylated.

Its subcellular location is the nucleus. In terms of biological role, acts as a basic transcriptional regulator. Represses basic transcription driven by several virus and cellular promoters. When associated with BRD7, activates transcription of glucocorticoid-responsive promoter in the absence of ligand-stimulation. Also plays a role in mRNA processing and transport. Binds avidly to poly(G) and poly(C) RNA homopolymers in vitro. The chain is Heterogeneous nuclear ribonucleoprotein U-like protein 1 (Hnrnpul1) from Mus musculus (Mouse).